A 182-amino-acid chain; its full sequence is Glutathione-regulated potassium-efflux system ancillary protein KefG (182 aa).

It belongs to the NAD(P)H dehydrogenase (quinone) family. KefG subfamily. As to quaternary structure, interacts with KefB.

It localises to the cell inner membrane. The catalysed reaction is a quinone + NADH + H(+) = a quinol + NAD(+). It catalyses the reaction a quinone + NADPH + H(+) = a quinol + NADP(+). In terms of biological role, regulatory subunit of a potassium efflux system that confers protection against electrophiles. Required for full activity of KefB. The polypeptide is Glutathione-regulated potassium-efflux system ancillary protein KefG (Yersinia pseudotuberculosis serotype O:1b (strain IP 31758)).